Reading from the N-terminus, the 337-residue chain is Inositol 2-dehydrogenase (337 aa).

The protein belongs to the Gfo/Idh/MocA family. As to quaternary structure, homotetramer.

The catalysed reaction is myo-inositol + NAD(+) = scyllo-inosose + NADH + H(+). Its function is as follows. Involved in the oxidation of myo-inositol (MI) to 2-keto-myo-inositol (2KMI or 2-inosose). The sequence is that of Inositol 2-dehydrogenase from Arthrobacter sp. (strain FB24).